A 409-amino-acid chain; its full sequence is Elongation factor Tu, chloroplastic (409 aa).

The region spanning 10 to 214 (KPHVNIGTIG…AVDTYIPTPE (205 aa)) is the tr-type G domain. Residues 19–26 (GHVDHGKT) are G1. 19–26 (GHVDHGKT) lines the GTP pocket. Position 26 (Thr-26) interacts with Mg(2+). The interval 60–64 (GITIN) is G2. The segment at 81 to 84 (DCPG) is G3. GTP is bound by residues 81–85 (DCPGH) and 136–139 (NKED). The G4 stretch occupies residues 136–139 (NKED). Residues 174–176 (SAL) are G5.

The protein belongs to the TRAFAC class translation factor GTPase superfamily. Classic translation factor GTPase family. EF-Tu/EF-1A subfamily.

It is found in the plastid. The protein localises to the chloroplast. It carries out the reaction GTP + H2O = GDP + phosphate + H(+). In terms of biological role, GTP hydrolase that promotes the GTP-dependent binding of aminoacyl-tRNA to the A-site of ribosomes during protein biosynthesis. This Porphyra purpurea (Red seaweed) protein is Elongation factor Tu, chloroplastic (tufA).